Reading from the N-terminus, the 300-residue chain is Folate-binding protein 1 (300 aa).

The N-terminal stretch at Met-1–Gly-28 is a signal peptide. Intrachain disulfides connect Cys-38-Cys-76, Cys-68-Cys-111, Cys-77-Cys-114, Cys-102-Cys-139, and Cys-132-Cys-178. Asn-173 is a glycosylation site (N-linked (GlcNAc...) asparagine). The helical transmembrane segment at Met-238–Ile-258 threads the bilayer.

It belongs to the folate receptor family. In terms of tissue distribution, expressed in leaves.

It is found in the membrane. In terms of biological role, folic acid-binding protein involved in salicylic acid- (SA-) induced folate accumulation by triggering uptake and accumulation of folic acid in cells. May be implicated in the transport of the folates from the site of production (leaves) to the site of storage (fruits and seeds) and utilization (roots). This is Folate-binding protein 1 from Arabidopsis thaliana (Mouse-ear cress).